The sequence spans 382 residues: Probable inactive dehydrogenase easA (382 aa).

FMN contacts are provided by residues Pro-25–Thr-27, Ala-60, Gln-102, and His-171. Positions 171 and 174 each coordinate substrate. FMN contacts are provided by residues Lys-223, Gly-299, Gly-324–Arg-325, and Arg-325. Tyr-352 is a substrate binding site.

It belongs to the NADH:flavin oxidoreductase/NADH oxidase family.

In terms of biological role, probable inactive dehydrogenase; part of the gene cluster that mediates the biosynthesis of fungal ergot alkaloid. DmaW catalyzes the first step of ergot alkaloid biosynthesis by condensing dimethylallyl diphosphate (DMAP) and tryptophan to form 4-dimethylallyl-L-tryptophan. The second step is catalyzed by the methyltransferase easF that methylates 4-dimethylallyl-L-tryptophan in the presence of S-adenosyl-L-methionine, resulting in the formation of 4-dimethylallyl-L-abrine. The catalase easC and the FAD-dependent oxidoreductase easE then transform 4-dimethylallyl-L-abrine to chanoclavine-I which is further oxidized by easD in the presence of NAD(+), resulting in the formation of chanoclavine-I aldehyde. Agroclavine dehydrogenase easG then mediates the conversion of chanoclavine-I aldehyde to agroclavine via a non-enzymatic adduct reaction: the substrate is an iminium intermediate that is formed spontaneously from chanoclavine-I aldehyde in the presence of glutathione. Further conversion of agroclavine to paspalic acid is a two-step process involving oxidation of agroclavine to elymoclavine and of elymoclavine to paspalic acid, the second step being performed by the elymoclavine oxidase cloA. However, cloA does not encode a functional enzyme indicating that C.fusiformis terminates its ergot alkaloid pathway at elymoclavine. The protein is Probable inactive dehydrogenase easA of Claviceps fusiformis (Ergot fungus).